Reading from the N-terminus, the 222-residue chain is UPF0502 protein PBPRB0676 (222 aa).

The protein belongs to the UPF0502 family.

In Photobacterium profundum (strain SS9), this protein is UPF0502 protein PBPRB0676.